The chain runs to 1455 residues: Nik-related protein kinase (1455 aa).

The 289-residue stretch at 25–313 (FSLDKAIGLG…SGNMLLHPFV (289 aa)) folds into the Protein kinase domain. ATP contacts are provided by residues 31-39 (IGLGTYGRI) and K54. D177 serves as the catalytic Proton acceptor. 2 disordered regions span residues 385-404 (LHGE…PQDQ) and 471-568 (TQDN…EDKE). Residues 471–480 (TQDNKATSPE) are compositionally biased toward polar residues. The segment covering 494–505 (EALETEQPKDLD) has biased composition (basic and acidic residues). Low complexity predominate over residues 520–531 (QPRQGQAAEQQQ). A compositionally biased stretch (acidic residues) spans 540 to 568 (PPEEDREPEQAEVQEEAVEPPQAEIEDKE). Positions 716–750 (RRRHRRWEDIFNQHEEQLRRVENDREDDSSDNDEV) form a coiled coil. Disordered stretches follow at residues 760 to 854 (IEPH…PPYS) and 1029 to 1080 (AFGN…TETS). Residues S847 and S850 each carry the phosphoserine modification. Residues 1029–1038 (AFGNHGANRG) are compositionally biased toward low complexity. Basic and acidic residues predominate over residues 1044 to 1078 (RNREANGRNEENGAFGRDQHVFPEFEHEESDRGTE). The 288-residue stretch at 1138 to 1425 (SSEVYCGSLW…RFLCARGDKM (288 aa)) folds into the CNH domain.

It belongs to the protein kinase superfamily. STE Ser/Thr protein kinase family. STE20 subfamily.

The enzyme catalyses L-seryl-[protein] + ATP = O-phospho-L-seryl-[protein] + ADP + H(+). It carries out the reaction L-threonyl-[protein] + ATP = O-phospho-L-threonyl-[protein] + ADP + H(+). May phosphorylate cofilin-1 and induce actin polymerization through this process, during the late stages of embryogenesis. Involved in the TNF-alpha-induced signaling pathway. The sequence is that of Nik-related protein kinase (Nrk) from Mus musculus (Mouse).